The following is a 143-amino-acid chain: Large ribosomal subunit protein uL11 (143 aa).

It belongs to the universal ribosomal protein uL11 family. In terms of assembly, part of the ribosomal stalk of the 50S ribosomal subunit. Interacts with L10 and the large rRNA to form the base of the stalk. L10 forms an elongated spine to which L12 dimers bind in a sequential fashion forming a multimeric L10(L12)X complex. One or more lysine residues are methylated.

Its function is as follows. Forms part of the ribosomal stalk which helps the ribosome interact with GTP-bound translation factors. This is Large ribosomal subunit protein uL11 from Variovorax paradoxus (strain S110).